The following is a 558-amino-acid chain: CTP synthase (558 aa).

An amidoligase domain region spans residues 1–267 (MAKFVFVTGG…CLEMLDVLNL (267 aa)). Ser13 provides a ligand contact to CTP. Ser13 provides a ligand contact to UTP. ATP contacts are provided by residues 14 to 19 (SIGKGI) and Asp71. Positions 71 and 141 each coordinate Mg(2+). CTP is bound by residues 148–150 (DIE), 188–193 (KTKPTQ), and Lys224. Residues 188 to 193 (KTKPTQ) and Lys224 contribute to the UTP site. The region spanning 292-534 (KVALVGKYVQ…IEAAQLRLPA (243 aa)) is the Glutamine amidotransferase type-1 domain. Gly354 serves as a coordination point for L-glutamine. Catalysis depends on Cys381, which acts as the Nucleophile; for glutamine hydrolysis. L-glutamine-binding positions include 382-385 (LGMQ), Glu405, and Arg462. Residues His507 and Glu509 contribute to the active site. The segment at 536-558 (PDEALRRQSQTNISAQEKPSRIG) is disordered. The span at 542-552 (RQSQTNISAQE) shows a compositional bias: polar residues.

It belongs to the CTP synthase family. Homotetramer.

It carries out the reaction UTP + L-glutamine + ATP + H2O = CTP + L-glutamate + ADP + phosphate + 2 H(+). The catalysed reaction is L-glutamine + H2O = L-glutamate + NH4(+). It catalyses the reaction UTP + NH4(+) + ATP = CTP + ADP + phosphate + 2 H(+). The protein operates within pyrimidine metabolism; CTP biosynthesis via de novo pathway; CTP from UDP: step 2/2. Allosterically activated by GTP, when glutamine is the substrate; GTP has no effect on the reaction when ammonia is the substrate. The allosteric effector GTP functions by stabilizing the protein conformation that binds the tetrahedral intermediate(s) formed during glutamine hydrolysis. Inhibited by the product CTP, via allosteric rather than competitive inhibition. Catalyzes the ATP-dependent amination of UTP to CTP with either L-glutamine or ammonia as the source of nitrogen. Regulates intracellular CTP levels through interactions with the four ribonucleotide triphosphates. This is CTP synthase from Prochlorococcus marinus (strain MIT 9303).